Reading from the N-terminus, the 776-residue chain is Calcium-independent phospholipase A2-gamma (776 aa).

Basic and acidic residues-rich tracts occupy residues 226 to 238 and 307 to 331; these read RQLQDKPCLEESK and LKSDPKSQPEEEEEPSKTDEPICKD. Disordered regions lie at residues 226-274 and 306-331; these read RQLQ…EALP and KLKSDPKSQPEEEEEPSKTDEPICKD. The PNPLA domain maps to 439 to 634; it reads LAIDGGGTRG…LLNNPSALAL (196 aa). Residues 443–448 carry the GXGXXG motif; that stretch reads GGGTRG. Residues 469 to 489 form a helical membrane-spanning segment; that stretch reads LFDYICGVSTGAILAFMLGLF. The short motif at 475-479 is the GXSXG element; that stretch reads GVSTG. The active-site Nucleophile is the S477. D621 functions as the Proton acceptor in the catalytic mechanism. A DGA/G motif is present at residues 621–623; that stretch reads DGG. K730 is modified (N6-succinyllysine).

The protein localises to the endoplasmic reticulum membrane. The protein resides in the microsome membrane. It localises to the mitochondrion membrane. Its subcellular location is the peroxisome membrane. The catalysed reaction is a 1,2-diacyl-sn-glycero-3-phosphocholine + H2O = a 1-acyl-sn-glycero-3-phosphocholine + a fatty acid + H(+). It catalyses the reaction a 1,2-diacyl-sn-glycero-3-phosphocholine + H2O = a 2-acyl-sn-glycero-3-phosphocholine + a fatty acid + H(+). It carries out the reaction a 1,2-diacyl-sn-glycero-3-phosphoethanolamine + H2O = a 1-acyl-sn-glycero-3-phosphoethanolamine + a fatty acid + H(+). The enzyme catalyses a 1-O-(1Z-alkenyl)-2-acyl-sn-glycero-3-phosphocholine + H2O = a 1-O-(1Z-alkenyl)-sn-glycero-3-phosphocholine + a fatty acid + H(+). The catalysed reaction is a 1-acyl-sn-glycero-3-phosphocholine + H2O = sn-glycerol 3-phosphocholine + a fatty acid + H(+). It catalyses the reaction 1-acyl-2-(9Z,12Z)-octadecadienoyl-sn-glycero-3-phosphocholine + H2O = a 1-acyl-sn-glycero-3-phosphocholine + (9Z,12Z)-octadecadienoate + H(+). It carries out the reaction 1-acyl-2-(5Z,8Z,11Z,14Z-eicosatetraenoyl)-sn-glycero-3-phosphocholine + H2O = a 1-acyl-sn-glycero-3-phosphocholine + (5Z,8Z,11Z,14Z)-eicosatetraenoate + H(+). The enzyme catalyses 1-hexadecanoyl-2-(5Z,8Z,11Z,14Z-eicosatetraenoyl)-sn-glycero-3-phosphocholine + H2O = 1-hexadecanoyl-sn-glycero-3-phosphocholine + (5Z,8Z,11Z,14Z)-eicosatetraenoate + H(+). The catalysed reaction is 1-octadecanoyl-2-(9Z-octadecenoyl)-sn-glycero-3-phosphocholine + H2O = 1-octadecanoyl-sn-glycero-3-phosphocholine + (9Z)-octadecenoate + H(+). It catalyses the reaction 1-hexadecanoyl-2-(9Z-octadecenoyl)-sn-glycero-3-phosphocholine + H2O = 1-hexadecanoyl-sn-glycero-3-phosphocholine + (9Z)-octadecenoate + H(+). It carries out the reaction 1-hexadecanoyl-2-(9Z,12Z-octadecadienoyl)-sn-glycero-3-phosphocholine + H2O = (9Z,12Z)-octadecadienoate + 1-hexadecanoyl-sn-glycero-3-phosphocholine + H(+). The enzyme catalyses 1-acyl-2-(9Z,12Z)-octadecadienoyl-sn-glycero-3-phosphoethanolamine + H2O = a 1-acyl-sn-glycero-3-phosphoethanolamine + (9Z,12Z)-octadecadienoate + H(+). The catalysed reaction is 1-acyl-2-(5Z,8Z,11Z,14Z)-eicosatetraenoyl-sn-glycero-3-phosphoethanolamine + H2O = a 1-acyl-sn-glycero-3-phosphoethanolamine + (5Z,8Z,11Z,14Z)-eicosatetraenoate + H(+). It catalyses the reaction 1-hexadecanoyl-2-(5Z,8Z,11Z,14Z-eicosatetraenoyl)-sn-glycero-3-phosphoethanolamine + H2O = 1-hexadecanoyl-sn-glycero-3-phosphoethanolamine + (5Z,8Z,11Z,14Z)-eicosatetraenoate + H(+). It carries out the reaction 1-hexadecanoyl-2-(5Z,8Z,11Z,14Z-eicosatetraenoyl)-sn-glycero-3-phosphocholine + H2O = 2-(5Z,8Z,11Z,14Z)-eicosatetraenoyl-sn-glycero-3-phosphocholine + hexadecanoate + H(+). The enzyme catalyses 1-octadecanoyl-2-(9Z-octadecenoyl)-sn-glycero-3-phosphocholine + H2O = 2-(9Z-octadecenoyl)-sn-glycero-3-phosphocholine + octadecanoate + H(+). The catalysed reaction is 1-hexadecanoyl-2-(4Z,7Z,10Z,13Z,16Z,19Z-docosahexaenoyl)-sn-glycero-3-phosphocholine + H2O = 2-(4Z,7Z,10Z,13Z,16Z,19Z-docosahexaenoyl)-sn-glycero-3-phosphocholine + hexadecanoate + H(+). It catalyses the reaction 1-O-(1Z)-hexadecenyl-2 (5Z,8Z,11Z,14Z)-eicosatetraenoyl-sn-glycero-3-phosphocholine + H2O = 1-(1Z-hexadecenyl)-sn-glycero-3-phosphocholine + (5Z,8Z,11Z,14Z)-eicosatetraenoate + H(+). It carries out the reaction 1-O-(1Z-hexadecenyl)-2-(9Z-octadecenoyl)-sn-glycero-3-phosphocholine + H2O = 1-(1Z-hexadecenyl)-sn-glycero-3-phosphocholine + (9Z)-octadecenoate + H(+). The enzyme catalyses 1-hexadecanoyl-sn-glycero-3-phosphocholine + H2O = sn-glycerol 3-phosphocholine + hexadecanoate + H(+). The catalysed reaction is 1',3'-bis-[1,2-di-(9Z,12Z-octadecadienoyl)-sn-glycero-3-phospho]-glycerol + H2O = 1'-[1,2-di-(9Z,12Z-octadecadienoyl)-sn-glycero-3-phospho]-3'-[1-(9Z,12Z-octadecadienoyl)-sn-glycero-3-phospho]-glycerol + (9Z,12Z)-octadecadienoate + H(+). It catalyses the reaction 1'-[1-acyl-2-(9-hydroxy-(10E,12Z)-octadecadienoyl)-sn-glycero-3-phospho]-3'-[1,2-diacyl-sn-glycero-3-phospho]-glycerol + H2O = 9-hydroxy-(10E,12Z)-octadecadienoate + 1'-[1,2-diacyl-sn-glycero-3-phospho],3'-[1-acyl-sn-glycero-3-phospho]-glycerol + H(+). Its pathway is phospholipid metabolism. With respect to regulation, calcium-independent phospholipase. Its function is as follows. Calcium-independent and membrane-bound phospholipase, that catalyzes the esterolytic cleavage of fatty acids from glycerophospholipids to yield free fatty acids and lysophospholipids, hence regulating membrane physical properties and the release of lipid second messengers and growth factors. Hydrolyzes phosphatidylethanolamine, phosphatidylcholine and probably phosphatidylinositol with a possible preference for the former. Has also a broad substrate specificity in terms of fatty acid moieties, hydrolyzing saturated and mono-unsaturated fatty acids at nearly equal rates from either the sn-1 or sn-2 position in diacyl phosphatidylcholine. However, has a weak activity toward polyunsaturated fatty acids at the sn-2 position, and thereby favors the production of 2-arachidonoyl lysophosphatidylcholine, a key branch point metabolite in eicosanoid signaling. On the other hand, can produce arachidonic acid from the sn-1 position of diacyl phospholipid and from the sn-2 position of arachidonate-containing plasmalogen substrates. Therefore, plays an important role in the mobilization of arachidonic acid in response to cellular stimuli and the generation of lipid second messengers. Can also hydrolyze lysophosphatidylcholine. In the mitochondrial compartment, catalyzes the hydrolysis and release of oxidized aliphatic chains from cardiolipin and integrates mitochondrial bioenergetics and signaling. It is essential for maintaining efficient bioenergetic mitochondrial function through tailoring mitochondrial membrane lipid metabolism and composition. This is Calcium-independent phospholipase A2-gamma from Rattus norvegicus (Rat).